The following is a 976-amino-acid chain: 3-O-beta-L-arabinopyranosyl-alpha-L-arabinofuranosidase (976 aa).

Positions Met1–Ala28 are cleaved as a signal peptide. Glu190 functions as the Proton donor in the catalytic mechanism. The Nucleophile role is filled by Glu315. The region spanning Leu519–Tyr654 is the CBM6 domain.

It belongs to the glycosyl hydrolase 39 family.

The protein resides in the secreted. The enzyme catalyses Hydrolysis of beta-L-Arap-(1-&gt;3)-L-Araf disaccharides from non-reducing terminals in branches of type II arabinogalactan attached to proteins.. Its function is as follows. Hydrolase involved in the degradation of the gum arabic arabinogalactan protein (AGP) and larch AGP. Catalyzes the release of 3-O-beta-L-arabinopyranosyl-L-arabinose (beta-L-Arap-(1-&gt;3)-L-Ara) from gum arabic AGP and larch AGP. Also cleaves a small amount of beta-L-Arap-(1-&gt;3)-L-Ara from sugar beet arabinan, but wheat AGP cannot be used as a substrate. Can also release 3-O-alpha-D-galactopyranosyl-L-arabinose (alpha-D-Galp-(1-&gt;3)-L-Ara) from gum arabic AGP, with low efficiency. This chain is 3-O-beta-L-arabinopyranosyl-alpha-L-arabinofuranosidase, found in Bifidobacterium pseudocatenulatum.